A 78-amino-acid chain; its full sequence is MAKVCQVTGKRPVTGHNVSHAKNHTKRRFLPNLHSHRFWVESEKRFVKLRISTKGMRIIDKKGIDTVLAELRARGEKV.

Positions 1-22 are disordered; that stretch reads MAKVCQVTGKRPVTGHNVSHAK.

This sequence belongs to the bacterial ribosomal protein bL28 family.

The protein is Large ribosomal subunit protein bL28 of Saccharophagus degradans (strain 2-40 / ATCC 43961 / DSM 17024).